Here is a 374-residue protein sequence, read N- to C-terminus: Pectate lyase 2 (374 aa).

The signal sequence occupies residues 1–22 (MKYLLPTAATGLLLLAAQPAVA). Cysteine 93 and cysteine 176 are disulfide-bonded. The Ca(2+) site is built by aspartate 150, aspartate 152, glutamate 187, and aspartate 191. Arginine 239 is a catalytic residue. Cysteine 350 and cysteine 373 are oxidised to a cystine.

Belongs to the polysaccharide lyase 1 family. PLADES subfamily. Ca(2+) serves as cofactor.

The protein resides in the secreted. The catalysed reaction is Eliminative cleavage of (1-&gt;4)-alpha-D-galacturonan to give oligosaccharides with 4-deoxy-alpha-D-galact-4-enuronosyl groups at their non-reducing ends.. It participates in glycan metabolism; pectin degradation; 2-dehydro-3-deoxy-D-gluconate from pectin: step 2/5. Involved in maceration and soft-rotting of plant tissue. The chain is Pectate lyase 2 (pel2) from Pectobacterium atrosepticum (strain SCRI 1043 / ATCC BAA-672) (Erwinia carotovora subsp. atroseptica).